We begin with the raw amino-acid sequence, 359 residues long: MTKKKVVIGMSGGVDSSVAAYLLKEQGYDVIGVTMQIWQEDKEYEEREGGCCSLSAVDDARRVAQKLDIPFYVLNFRDSFKRNVIDYFVDEYIQGRTPNPCIACNKYLKFDELLQKAKGIGADYVATGHYAKIEERDGRFQLIRSKDDRKDQTYALYNLTQEQLEHTLMPCGEFTKDKIREIAKEIGLDVHNKKDSEEICFIPDNNHGRYICEAAPNKVRPGNFVDKYGNVLGKHKGIVYYTIGQRKGLGLALGRPVFVTDINPVTNTVVVGPEEDIFKTDLVCKDINFISIDKLEGPMEVEAKIRYSARPAKATISPMENGRVKVSFEDKQRAITKGQSVVFYKDDLVVGGGIIESLL.

Residues 9–16 (GMSGGVDS) and Met-35 contribute to the ATP site. The active-site Nucleophile is the Cys-104. Cysteines 104 and 200 form a disulfide. An ATP-binding site is contributed by Gly-128. An interaction with tRNA region spans residues 150-152 (KDQ). Cys-200 serves as the catalytic Cysteine persulfide intermediate. Residues 306-307 (RY) form an interaction with tRNA region.

The protein belongs to the MnmA/TRMU family.

Its subcellular location is the cytoplasm. The catalysed reaction is S-sulfanyl-L-cysteinyl-[protein] + uridine(34) in tRNA + AH2 + ATP = 2-thiouridine(34) in tRNA + L-cysteinyl-[protein] + A + AMP + diphosphate + H(+). Functionally, catalyzes the 2-thiolation of uridine at the wobble position (U34) of tRNA, leading to the formation of s(2)U34. This chain is tRNA-specific 2-thiouridylase MnmA, found in Clostridium perfringens (strain ATCC 13124 / DSM 756 / JCM 1290 / NCIMB 6125 / NCTC 8237 / Type A).